Here is a 78-residue protein sequence, read N- to C-terminus: Major outer membrane lipoprotein Lpp (78 aa).

A signal peptide spans 1 to 20 (MNRTKIVLGAVVLASTLLAG). Cys21 is lipidated: N-palmitoyl cysteine. Residue Cys21 is the site of S-diacylglycerol cysteine attachment. Repeats lie at residues 24–34 (TAKVDQLTSDI) and 38–48 (NAKVDQLSNDV). Residues 27–75 (VDQLTSDIQTLNAKVDQLSNDVNAVHTDVQAAKDDAARANQRLDNQVRS) are a coiled coil. Position 78 is an N6-murein peptidoglycan lysine (Lys78).

This sequence belongs to the Lpp family. Homotrimer.

Its subcellular location is the cell outer membrane. It localises to the secreted. The protein resides in the cell wall. In terms of biological role, a highly abundant outer membrane lipoprotein that controls the distance between the inner and outer membranes. The only protein known to be covalently linked to the peptidoglycan network (PGN). Also non-covalently binds the PGN. The link between the cell outer membrane and PGN contributes to maintenance of the structural and functional integrity of the cell envelope, and maintains the correct distance between the PGN and the outer membrane. The protein is Major outer membrane lipoprotein Lpp of Photorhabdus laumondii subsp. laumondii (strain DSM 15139 / CIP 105565 / TT01) (Photorhabdus luminescens subsp. laumondii).